Here is a 232-residue protein sequence, read N- to C-terminus: Orotidine 5'-phosphate decarboxylase (232 aa).

Substrate-binding positions include Asp-13, Lys-35, 62–71 (DLKFHDIPNT), Thr-122, Arg-182, Gln-191, Gly-211, and Arg-212. Residue Lys-64 is the Proton donor of the active site.

This sequence belongs to the OMP decarboxylase family. Type 1 subfamily. As to quaternary structure, homodimer.

The catalysed reaction is orotidine 5'-phosphate + H(+) = UMP + CO2. The protein operates within pyrimidine metabolism; UMP biosynthesis via de novo pathway; UMP from orotate: step 2/2. Catalyzes the decarboxylation of orotidine 5'-monophosphate (OMP) to uridine 5'-monophosphate (UMP). The polypeptide is Orotidine 5'-phosphate decarboxylase (Pseudomonas fluorescens (strain Pf0-1)).